The chain runs to 179 residues: Laminin-binding fimbrial subunit ElfA (179 aa).

The signal sequence occupies residues methionine 1–alanine 21.

This sequence belongs to the fimbrial protein family.

It localises to the fimbrium. Part of the elfADCG fimbrial operon, which could be required for adherence to host epithelial cells. ElfA is an accessory colonization factor that contributes to adherence of bacteria to human intestinal epithelial cells and to animal intestinal tissue in vitro. Binds specifically to laminin, but not to fibronectin or collagen type IV. The sequence is that of Laminin-binding fimbrial subunit ElfA (elfA) from Escherichia coli O157:H7.